The sequence spans 55 residues: MAQHQGGKGNFAEDPKRASEAGKKGGQASGGNFKNDPQRASEAGKKGGQRSHGGN.

The segment at 1 to 55 (MAQHQGGKGNFAEDPKRASEAGKKGGQASGGNFKNDPQRASEAGKKGGQRSHGGN) is disordered. 2 stretches are compositionally biased toward basic and acidic residues: residues 11–23 (FAED…EAGK) and 36–45 (DPQRASEAGK).

The protein belongs to the con-10 family.

Functionally, may be involved in the regulation of the production of pyocyanine, one of the major virulence factors secreted by P.aeruginosa, and other virulence factors. The polypeptide is Putative virulence-regulating protein PA2146 (Pseudomonas aeruginosa (strain ATCC 15692 / DSM 22644 / CIP 104116 / JCM 14847 / LMG 12228 / 1C / PRS 101 / PAO1)).